The chain runs to 194 residues: dITP/XTP pyrophosphatase (194 aa).

Residue 11-16 (SHNAGK) participates in substrate binding. The Proton acceptor role is filled by aspartate 70. Residue aspartate 70 participates in Mg(2+) binding. Substrate contacts are provided by residues serine 71, 149 to 152 (FGYD), lysine 172, and 177 to 178 (HR).

Belongs to the HAM1 NTPase family. In terms of assembly, homodimer. Mg(2+) serves as cofactor.

It carries out the reaction XTP + H2O = XMP + diphosphate + H(+). The catalysed reaction is dITP + H2O = dIMP + diphosphate + H(+). The enzyme catalyses ITP + H2O = IMP + diphosphate + H(+). Functionally, pyrophosphatase that catalyzes the hydrolysis of nucleoside triphosphates to their monophosphate derivatives, with a high preference for the non-canonical purine nucleotides XTP (xanthosine triphosphate), dITP (deoxyinosine triphosphate) and ITP. Seems to function as a house-cleaning enzyme that removes non-canonical purine nucleotides from the nucleotide pool, thus preventing their incorporation into DNA/RNA and avoiding chromosomal lesions. The polypeptide is dITP/XTP pyrophosphatase (Thermosynechococcus vestitus (strain NIES-2133 / IAM M-273 / BP-1)).